Reading from the N-terminus, the 169-residue chain is Group 2 truncated hemoglobin 3-2 (169 aa).

A heme b-binding site is contributed by H99.

The protein belongs to the truncated hemoglobin family. Group II subfamily. In terms of assembly, homodimer when ferric.

Functionally, hemoglobin-like protein that exhibits an unusual concentration-independent binding of O(2) and CO. Required for general plant development and during nodulation. May promote shoot organogenesis from root explants. The sequence is that of Group 2 truncated hemoglobin 3-2 from Medicago truncatula (Barrel medic).